A 185-amino-acid chain; its full sequence is Peptidyl-tRNA hydrolase (185 aa).

Tyrosine 14 contacts tRNA. Histidine 19 serves as the catalytic Proton acceptor. 3 residues coordinate tRNA: tyrosine 65, asparagine 67, and asparagine 113.

The protein belongs to the PTH family. As to quaternary structure, monomer.

It localises to the cytoplasm. The catalysed reaction is an N-acyl-L-alpha-aminoacyl-tRNA + H2O = an N-acyl-L-amino acid + a tRNA + H(+). Functionally, hydrolyzes ribosome-free peptidyl-tRNAs (with 1 or more amino acids incorporated), which drop off the ribosome during protein synthesis, or as a result of ribosome stalling. In terms of biological role, catalyzes the release of premature peptidyl moieties from peptidyl-tRNA molecules trapped in stalled 50S ribosomal subunits, and thus maintains levels of free tRNAs and 50S ribosomes. The polypeptide is Peptidyl-tRNA hydrolase (Rickettsia bellii (strain OSU 85-389)).